The following is a 286-amino-acid chain: Shikimate dehydrogenase (NADP(+)) (286 aa).

Shikimate-binding positions include 19–21 (SFS) and Thr-66. The active-site Proton acceptor is Lys-70. The shikimate site is built by Asn-91 and Asp-107. NADP(+) contacts are provided by residues 129 to 133 (GSGGA) and Leu-229. A shikimate-binding site is contributed by Tyr-231. Gly-252 provides a ligand contact to NADP(+).

It belongs to the shikimate dehydrogenase family. As to quaternary structure, homodimer.

It carries out the reaction shikimate + NADP(+) = 3-dehydroshikimate + NADPH + H(+). It participates in metabolic intermediate biosynthesis; chorismate biosynthesis; chorismate from D-erythrose 4-phosphate and phosphoenolpyruvate: step 4/7. In terms of biological role, involved in the biosynthesis of the chorismate, which leads to the biosynthesis of aromatic amino acids. Catalyzes the reversible NADPH linked reduction of 3-dehydroshikimate (DHSA) to yield shikimate (SA). This Prochlorococcus marinus (strain MIT 9301) protein is Shikimate dehydrogenase (NADP(+)).